The chain runs to 274 residues: MTQALQALIDQAWEDRTSLSPKSAPNDIREAVANVISQLDSGALRVAEKQGKDWVVNQWIKKAVLLSFRLEDNAPMSAGGFAQFYDKVPTKFANWTGDDFAKAGFRVVPPAVARRGSYIARNAVLMPSYVNIGAYVDEGTMVDTWATVGSCAQIGKNVHLSGGVGIGGVLEPLQANPVIIEDNCFIGARSEVVEGVIIEENSVISMGVYLGQSTKIYDRETGEIHYGRVPAGSVVVAGNLPSKDGKYSLYCAVIVKKVDAQTRAKTSLNDLLRD.

Substrate-binding residues include Arg106 and Asp143.

It belongs to the transferase hexapeptide repeat family. In terms of assembly, homotrimer.

Its subcellular location is the cytoplasm. It carries out the reaction (S)-2,3,4,5-tetrahydrodipicolinate + succinyl-CoA + H2O = (S)-2-succinylamino-6-oxoheptanedioate + CoA. It functions in the pathway amino-acid biosynthesis; L-lysine biosynthesis via DAP pathway; LL-2,6-diaminopimelate from (S)-tetrahydrodipicolinate (succinylase route): step 1/3. This Cupriavidus metallidurans (strain ATCC 43123 / DSM 2839 / NBRC 102507 / CH34) (Ralstonia metallidurans) protein is 2,3,4,5-tetrahydropyridine-2,6-dicarboxylate N-succinyltransferase.